A 365-amino-acid polypeptide reads, in one-letter code: Guanine nucleotide-binding protein alpha-6 subunit (365 aa).

Gly2 carries N-myristoyl glycine lipidation. Residues 42 to 364 (NRFKILLLGT…NENLRSAGLH (323 aa)) enclose the G-alpha domain. The G1 motif stretch occupies residues 45 to 58 (KILLLGTAESGKST). Residues 50–57 (GTAESGKS), 187–193 (VHCRIST), 212–216 (DVGGQ), 281–284 (NKYD), and Ala336 contribute to the GTP site. Ser57 and Thr193 together coordinate Mg(2+). The interval 185 to 193 (DIVHCRIST) is G2 motif. A G3 motif region spans residues 208 to 217 (FKMVDVGGQR). Positions 277-284 (VLFLNKYD) are G4 motif. The G5 motif stretch occupies residues 334-339 (TTATDT).

Belongs to the G-alpha family. In terms of assembly, g proteins are composed of 3 units; alpha, beta and gamma. The alpha chain contains the guanine nucleotide binding site.

Guanine nucleotide-binding proteins (G proteins) are involved as modulators or transducers in various transmembrane signaling systems. The sequence is that of Guanine nucleotide-binding protein alpha-6 subunit (gpa-6) from Caenorhabditis briggsae.